A 199-amino-acid polypeptide reads, in one-letter code: uncharacterized protein (199 aa).

A helical transmembrane segment spans residues 7-27; the sequence is FWFWLILGIIALFIIVKAIVI.

It belongs to the band 7/mec-2 family.

The protein localises to the membrane. This is an uncharacterized protein from Methanocaldococcus jannaschii (strain ATCC 43067 / DSM 2661 / JAL-1 / JCM 10045 / NBRC 100440) (Methanococcus jannaschii).